We begin with the raw amino-acid sequence, 1311 residues long: Kinase and exchange factor for Rac A (1311 aa).

The 299-residue stretch at 18–316 (LVFKDIIGKG…STIVTILESI (299 aa)) folds into the Protein kinase domain. Residues 24 to 32 (IGKGNFGCV) and K45 contribute to the ATP site. The active-site Proton acceptor is D138. Disordered regions lie at residues 169–201 (NGSD…KNNG), 360–426 (QQQS…TTTT), and 446–471 (PLSK…LIGS). A compositionally biased stretch (low complexity) spans 451 to 471 (QQQQQRNQNSSIIDNNSLIGS). The region spanning 650-679 (ELNLIIKLQSRIRGWLVRRRYKIFLSNWKL) is the IQ domain. Positions 691-927 (QWIRLFNQLI…RETSNYIQSQ (237 aa)) constitute a DH domain. Composition is skewed to low complexity over residues 994 to 1021 (SKYN…TNSN) and 1031 to 1044 (STSN…GNNN). Disordered stretches follow at residues 994–1044 (SKYN…GNNN), 1114–1145 (NNPN…NGSI), and 1208–1311 (GTST…FSKD). Residues 1117-1137 (NGGGSNNNSIGGGGGGRGGSG) are compositionally biased toward gly residues. Residues 1208 to 1229 (GTSTPERKTSLVNMSPSTTSSL) are compositionally biased toward polar residues. Residues 1230-1245 (NNIDSNYNNNNNNVTN) show a composition bias toward low complexity. Residues 1246–1257 (TPIKSVTSSPSI) are compositionally biased toward polar residues. Positions 1263-1276 (NDNNQQPQLPSQPN) are enriched in low complexity. Positions 1277-1287 (EEFQFTVPTTP) are enriched in polar residues. Residues 1290 to 1303 (KKKKRGSFSSKLKR) show a composition bias toward basic residues.

This sequence belongs to the protein kinase superfamily. TKL Ser/Thr protein kinase family. Mg(2+) serves as cofactor.

It catalyses the reaction L-seryl-[protein] + ATP = O-phospho-L-seryl-[protein] + ADP + H(+). The catalysed reaction is L-threonyl-[protein] + ATP = O-phospho-L-threonyl-[protein] + ADP + H(+). In Dictyostelium discoideum (Social amoeba), this protein is Kinase and exchange factor for Rac A (kxcA).